Consider the following 239-residue polypeptide: Transcriptional regulatory protein BtsR (239 aa).

Residues 3–116 enclose the Response regulatory domain; the sequence is KVLIVDDEPL…RLEKTLARLR (114 aa). 4-aspartylphosphate is present on aspartate 54. In terms of domain architecture, HTH LytTR-type spans 137–239; that stretch reads IPCTGHSRIY…LKSLKEAIGL (103 aa).

In terms of processing, phosphorylated by BtsS.

In terms of biological role, member of the two-component regulatory system BtsS/BtsR. BtsR regulates expression of btsT by binding to its promoter region. The chain is Transcriptional regulatory protein BtsR from Shigella flexneri.